The sequence spans 154 residues: Ribosome maturation factor RimP (154 aa).

The protein belongs to the RimP family.

The protein resides in the cytoplasm. Its function is as follows. Required for maturation of 30S ribosomal subunits. This Thioalkalivibrio sulfidiphilus (strain HL-EbGR7) protein is Ribosome maturation factor RimP.